The chain runs to 266 residues: Glucosamine-6-phosphate deaminase (266 aa).

D72 functions as the Proton acceptor; for enolization step in the catalytic mechanism. The For ring-opening step role is filled by D141. The active-site Proton acceptor; for ring-opening step is the H143. The active-site For ring-opening step is E148.

Belongs to the glucosamine/galactosamine-6-phosphate isomerase family. NagB subfamily. As to quaternary structure, homohexamer.

The enzyme catalyses alpha-D-glucosamine 6-phosphate + H2O = beta-D-fructose 6-phosphate + NH4(+). The protein operates within amino-sugar metabolism; N-acetylneuraminate degradation; D-fructose 6-phosphate from N-acetylneuraminate: step 5/5. With respect to regulation, allosterically activated by N-acetylglucosamine 6-phosphate (GlcNAc6P). Catalyzes the reversible isomerization-deamination of glucosamine 6-phosphate (GlcN6P) to form fructose 6-phosphate (Fru6P) and ammonium ion. This is Glucosamine-6-phosphate deaminase from Klebsiella pneumoniae (strain 342).